Here is a 151-residue protein sequence, read N- to C-terminus: uncharacterized protein (151 aa).

This is an uncharacterized protein from Rhodobacter capsulatus (Rhodopseudomonas capsulata).